Reading from the N-terminus, the 214-residue chain is Adenylate kinase (214 aa).

Residue 10 to 15 participates in ATP binding; the sequence is GAGKGT. The interval 30–59 is NMP; the sequence is STGDMLRAAVKAGSELGLKAKEIMDAGKLV. AMP is bound by residues Thr-31, Arg-36, 57-59, 85-88, and Gln-92; these read KLV and GFPR. The interval 122 to 159 is LID; that stretch reads GRRVHAASGRVYHVKFNPPKVEDKDDVTGEDLTIRKDD. ATP contacts are provided by residues Arg-123 and 132 to 133; that span reads VY. AMP contacts are provided by Arg-156 and Arg-167. Residue Arg-200 participates in ATP binding.

It belongs to the adenylate kinase family. As to quaternary structure, monomer.

It localises to the cytoplasm. It catalyses the reaction AMP + ATP = 2 ADP. It functions in the pathway purine metabolism; AMP biosynthesis via salvage pathway; AMP from ADP: step 1/1. Functionally, catalyzes the reversible transfer of the terminal phosphate group between ATP and AMP. Plays an important role in cellular energy homeostasis and in adenine nucleotide metabolism. The chain is Adenylate kinase from Yersinia enterocolitica serotype O:8 / biotype 1B (strain NCTC 13174 / 8081).